The primary structure comprises 271 residues: Calretinin (271 aa).

EF-hand domains are found at residues 16 to 51 (LTAS…LEKA), 63 to 98 (NFGE…EENF), 107 to 142 (GSSA…LLKK), 151 to 186 (KLQE…QENF), 195 to 230 (LTSE…LYEK), and 235 to 270 (MNIQ…SEPP). 25 residues coordinate Ca(2+): aspartate 29, aspartate 31, asparagine 33, tyrosine 35, glutamate 40, aspartate 76, asparagine 78, aspartate 80, lysine 82, glutamate 87, aspartate 120, aspartate 122, serine 124, tyrosine 126, glutamate 131, aspartate 164, asparagine 166, aspartate 168, lysine 170, glutamate 175, aspartate 208, aspartate 210, serine 212, tyrosine 214, and glutamate 219. A Phosphotyrosine modification is found at tyrosine 214.

It belongs to the calbindin family. As to expression, brain.

It localises to the synapse. The protein localises to the cell projection. Its subcellular location is the dendrite. In terms of biological role, calcium-binding protein involved in calcium homeostasis and signal transduction. It plays a critical role in buffering intracellular calcium levels and modulating calcium-dependent signaling pathways. Predominantly expressed in specific neuronal populations, influences synaptic plasticity and neuronal excitability, contributing to learning and memory. During embryonic development, it facilitates neuronal differentiation and maturation. The protein is Calretinin of Homo sapiens (Human).